A 263-amino-acid polypeptide reads, in one-letter code: MKIALGIEYNGKNYFGWQRQEKVHSVQAELEKALSFVANEKIEVFCAGRTDSGVHGTGQVVHFETNAIRPEKAWAFGTNANLPDDIAVRWAKEVPDDFHARFSATARRYRYVLYCNKLRSAILPYGITHTHLDLDEHKMQEAGRFLLGENDFSSFRAAQCQSNTPWRNIHHLNVIRRGNFVIVDIKANAFVHHMVRNIVGSLMEVGCGNQPPEWIEWLLAQKNRKLAAPTAKAEGLYLVQVTYPEHFELPQMPLGPLFLADEL.

Asp-51 serves as the catalytic Nucleophile. Residue Tyr-109 participates in substrate binding.

This sequence belongs to the tRNA pseudouridine synthase TruA family. As to quaternary structure, homodimer.

The catalysed reaction is uridine(38/39/40) in tRNA = pseudouridine(38/39/40) in tRNA. Its function is as follows. Formation of pseudouridine at positions 38, 39 and 40 in the anticodon stem and loop of transfer RNAs. The polypeptide is tRNA pseudouridine synthase A (Mannheimia succiniciproducens (strain KCTC 0769BP / MBEL55E)).